The primary structure comprises 347 residues: MKRGRGTAIAFHSTIFIFKPAKCATLVIERGVVREIPVKLKGRPINSLNKESTYKYLGIQTGAGAKVSTMGLLEKVTRELDCIVRSDLIPPQKLDCVKTFALSKLTYMNSNSMPPITEMRKFANIVMRAVKVIHSIPIRGSPLEYVQLPIKDGGLGVPCPRVTNMVTFVVSTMKKLWSPDNYIRNLYMSFAEEVVKMETGKKEVNLEDIAQYLNVEQRTVRSNFGYNCFSRLKDALRNLASGGDSPLFKIKIVVKNKKLAVLVQATEDSNEKLFTEDGVKKMQRAMNEQVSRALKHRFHTTKLVKSEISRVVQMHPASNKFVARGGNLSLACHRFVHKARLNLLACN.

This is an uncharacterized protein from Caenorhabditis elegans.